The chain runs to 287 residues: Pyridoxal kinase PdxY (287 aa).

Substrate contacts are provided by residues S9 and 44–45; that span reads TQ. Residues D111, A143, E148, K181, and 208–211 each bind ATP; that span reads RPLV. D223 provides a ligand contact to substrate.

This sequence belongs to the pyridoxine kinase family. PdxY subfamily. Homodimer. The cofactor is Mg(2+).

It catalyses the reaction pyridoxal + ATP = pyridoxal 5'-phosphate + ADP + H(+). The protein operates within cofactor metabolism; pyridoxal 5'-phosphate salvage; pyridoxal 5'-phosphate from pyridoxal: step 1/1. Its function is as follows. Pyridoxal kinase involved in the salvage pathway of pyridoxal 5'-phosphate (PLP). Catalyzes the phosphorylation of pyridoxal to PLP. The chain is Pyridoxal kinase PdxY from Photorhabdus laumondii subsp. laumondii (strain DSM 15139 / CIP 105565 / TT01) (Photorhabdus luminescens subsp. laumondii).